A 260-amino-acid polypeptide reads, in one-letter code: MFDIGVNLTSSQFAKDRDDVVARAFDAGVNGLLITGTNLRESQQAQKLARQYSSCWSTAGVHPHDSSQWQAATEEAIIELAAQPEVVAIGECGLDFNRNFSTPEEQERAFVAQLRIAAELNMPVFMHCRDAHERFMTLLEPWLDKLPGAVLHCFTGTREEMQACVARGIYIGITGWVCDERRGLELRELLPLIPAEKLLIETDAPYLLPRDLTPKPSSRRNEPAHLPHILQRIAHWRGEDAAWLAATTDANVKTLFGIAF.

Positions 91, 127, and 152 each coordinate a divalent metal cation.

This sequence belongs to the metallo-dependent hydrolases superfamily. TatD-type hydrolase family. TatD subfamily. As to quaternary structure, monomer. The cofactor is Mg(2+).

It is found in the cytoplasm. In terms of biological role, 3'-5' exonuclease that prefers single-stranded DNA and RNA. May play a role in the H(2)O(2)-induced DNA damage repair. The sequence is that of 3'-5' ssDNA/RNA exonuclease TatD from Shigella flexneri serotype 5b (strain 8401).